Reading from the N-terminus, the 447-residue chain is GTPase Der (447 aa).

EngA-type G domains lie at 3–167 and 181–354; these read PVIA…FAER and TRIA…AAAM. GTP is bound by residues 9-16, 56-60, 119-122, 187-194, 234-238, and 299-302; these read GRPNVGKS, DTGGF, NKAE, DTAGL, and NKWD. Residues 355-439 form the KH-like domain; the sequence is VKLPTPKLTR…PLRIEFRTNK (85 aa).

It belongs to the TRAFAC class TrmE-Era-EngA-EngB-Septin-like GTPase superfamily. EngA (Der) GTPase family. In terms of assembly, associates with the 50S ribosomal subunit.

GTPase that plays an essential role in the late steps of ribosome biogenesis. This chain is GTPase Der, found in Ralstonia pickettii (strain 12J).